A 539-amino-acid polypeptide reads, in one-letter code: Fucosyltransferase 2 (539 aa).

Residues 1–5 lie on the Cytoplasmic side of the membrane; that stretch reads MRITE. Residues 6 to 26 form a helical; Signal-anchor for type II membrane protein membrane-spanning segment; the sequence is ILALFMVLVPVSLVIVAMFGY. Topologically, residues 27 to 539 are lumenal; sequence DQGNGFVQAS…SWGLKLVDNF (513 aa). Residues Asn44, Asn231, and Asn482 are each glycosylated (N-linked (GlcNAc...) asparagine).

It belongs to the glycosyltransferase 37 family. Expressed in roots, stems, leaves, flowers, siliques and seedlings.

The protein localises to the golgi apparatus. Its subcellular location is the golgi stack membrane. It functions in the pathway protein modification; protein glycosylation. Functionally, may be involved in cell wall biosynthesis. May act as a fucosyltransferase. This Arabidopsis thaliana (Mouse-ear cress) protein is Fucosyltransferase 2 (FUT2).